Here is a 459-residue protein sequence, read N- to C-terminus: Elongation factor 1-alpha 4 (459 aa).

In terms of domain architecture, tr-type G spans 5–242; sequence KTHINIVVIG…DCIIPPQRPT (238 aa). Positions 14-21 are G1; sequence GHVDSGKS. The interval 70 to 74 is G2; the sequence is GITID. The segment at 91 to 94 is G3; it reads DAPG. The G4 stretch occupies residues 153–156; sequence NKMD. The segment at 194 to 196 is G5; it reads SGF. A 5-glutamyl glycerylphosphorylethanolamine mark is found at E301 and E374.

This sequence belongs to the TRAFAC class translation factor GTPase superfamily. Classic translation factor GTPase family. EF-Tu/EF-1A subfamily.

It is found in the cytoplasm. In terms of biological role, this protein promotes the GTP-dependent binding of aminoacyl-tRNA to the A-site of ribosomes during protein biosynthesis. In Oscheius tipulae, this protein is Elongation factor 1-alpha 4 (eft-4).